The primary structure comprises 428 residues: Histidine--tRNA ligase (428 aa).

The protein belongs to the class-II aminoacyl-tRNA synthetase family. In terms of assembly, homodimer.

It is found in the cytoplasm. It catalyses the reaction tRNA(His) + L-histidine + ATP = L-histidyl-tRNA(His) + AMP + diphosphate + H(+). This chain is Histidine--tRNA ligase, found in Mesomycoplasma hyopneumoniae (strain 7448) (Mycoplasma hyopneumoniae).